Consider the following 969-residue polypeptide: Vacuolar membrane protease (969 aa).

Residues 1–12 lie on the Cytoplasmic side of the membrane; sequence MTRVNSIIGFRP. A helical transmembrane segment spans residues 13-33; it reads IPVTLLTVITYVSLFSALLFI. Residues 34-381 lie on the Vacuolar side of the membrane; it reads DRQPPAVAKK…RAFSVLHLHT (348 aa). An N-linked (GlcNAc...) asparagine glycan is attached at N125. Zn(2+) contacts are provided by H166 and D178. E216 (proton acceptor) is an active-site residue. Residues E217, E242, and H315 each contribute to the Zn(2+) site. N355 carries an N-linked (GlcNAc...) asparagine glycan. Residues 382–402 traverse the membrane as a helical segment; it reads IFAFTITLIVVPFVVVLVAMW. At 403-438 the chain is on the cytoplasmic side; sequence ALGHFDKLYFFSNTAYIPPPPEHSIASRTTQGWRGV. The helical transmembrane segment at 439 to 459 threads the bilayer; sequence LRFPVAFVAASAGVVGMAFLI. Residues 460–469 are Vacuolar-facing; it reads NKINPMVVYA. A helical membrane pass occupies residues 470–490; it reads SQYTVWTCFLSTWWIIAWVIL. Residues 491-505 are Cytoplasmic-facing; that stretch reads RGADAVRPTALARGY. Residues 506–526 form a helical membrane-spanning segment; it reads GFLEQWLLWLVAMIGVAISIG. At 527–531 the chain is on the vacuolar side; the sequence is KSHLG. The chain crosses the membrane as a helical span at residues 532–552; that stretch reads SGYWVLVFYSGFFTSAFISLL. The Cytoplasmic portion of the chain corresponds to 553–662; it reads EMAALQKKSE…WSKDLPSWTW (110 aa). The disordered stretch occupies residues 571-629; that stretch reads DQAYPPEEHSQTGASGNISNRAANDDDDAGEHATEETPLFRGPNRPLSFAPHRNPRYDN. The span at 581–592 shows a compositional bias: polar residues; sequence QTGASGNISNRA. A helical transmembrane segment spans residues 663 to 683; sequence ILQFLATVPLQLVLAGSVALL. Over 684 to 698 the chain is Vacuolar; it reads LGNALAQTGADGSDM. Residues 699-719 traverse the membrane as a helical segment; the sequence is LTVLLGFGVFSIILLLPVAPF. The Cytoplasmic segment spans residues 720 to 727; that stretch reads LHRITYHV. A helical membrane pass occupies residues 728 to 748; the sequence is TLFIFVIFVGTFIYNLAAPPF. The Vacuolar segment spans residues 749–969; that stretch reads SPNARLKVYF…LVEGSVPFMI (221 aa). An N-linked (GlcNAc...) asparagine glycan is attached at N840.

This sequence belongs to the peptidase M28 family. Zn(2+) serves as cofactor.

The protein localises to the vacuole membrane. May be involved in vacuolar sorting and osmoregulation. The protein is Vacuolar membrane protease of Tuber melanosporum (strain Mel28) (Perigord black truffle).